A 468-amino-acid polypeptide reads, in one-letter code: Glutamate--tRNA ligase 2 (468 aa).

The 'HIGH' region signature appears at Pro-9–Gly-19. The 'KMSKS' region signature appears at Lys-238–Arg-242. Lys-241 is an ATP binding site.

The protein belongs to the class-I aminoacyl-tRNA synthetase family. Glutamate--tRNA ligase type 1 subfamily. In terms of assembly, monomer.

It localises to the cytoplasm. The catalysed reaction is tRNA(Glu) + L-glutamate + ATP = L-glutamyl-tRNA(Glu) + AMP + diphosphate. In terms of biological role, catalyzes the attachment of glutamate to tRNA(Glu) in a two-step reaction: glutamate is first activated by ATP to form Glu-AMP and then transferred to the acceptor end of tRNA(Glu). The sequence is that of Glutamate--tRNA ligase 2 from Anaplasma phagocytophilum (strain HZ).